The primary structure comprises 213 residues: MSYAYLFKYIIIGDTGVGKSCLLLQFTDKRFQPVHDLTIGVEFGARMITIDGKQIKLQIWDTAGQEAFRSITRSYYRGAAGALLVYDITRRETFNHLTTWLEDARQHSNSNMVIMLIGNKSDLDSRREVKKEEGEAFAREHGLVFMETSARTAANVEEAFINTAKEIYEKIQEGVFDINNEANGIKIGQQHSPTNPSLPGAGGAAGAANSGCC.

Thr-15, Gly-16, Gly-18, Lys-19, Ser-20, Cys-21, Gln-32, Pro-33, His-35, Thr-38, Gly-64, Asn-119, Asp-122, and Ala-150 together coordinate GTP. Ser-20 is a binding site for Mg(2+). Position 38 (Thr-38) interacts with Mg(2+). Positions 190-213 (QHSPTNPSLPGAGGAAGAANSGCC) are disordered. Residues Cys-212 and Cys-213 are each lipidated (S-geranylgeranyl cysteine).

The protein belongs to the small GTPase superfamily. Rab family. As to quaternary structure, interacts (GTP-bound form) with Vps16A and Vps39; the interaction with Vps39 is probably direct.

The protein resides in the vesicle. Its subcellular location is the cytoplasmic vesicle. It localises to the cell projection. The protein localises to the axon. It is found in the presynapse. The protein resides in the presynaptic active zone. Its subcellular location is the golgi apparatus. It localises to the trans-Golgi network. The protein localises to the perikaryon. It is found in the autophagosome membrane. The protein resides in the autolysosome membrane. The enzyme catalyses GTP + H2O = GDP + phosphate + H(+). Functionally, may be involved in bidirectional endoplasmic reticulum (ER) to Golgi trafficking. Together with Rab7 involved in promoting fusion of autophagosomes and endosomes with lysosomes, probably through recruitment of the HOPS tethering complex. Involved in biosynthetic transport to lysosomes. In larval motor neurons, mediates the biogenesis of presynaptic cargo vesicles and their long-range axonal trafficking to synaptic termini. Not involved in axonal trafficking of mitochondria. During vesicle biogenesis, active zone proteins (including brp/Bruchpilot) and synaptic vesicle proteins (including VGlut) are sorted from the trans-Golgi in a Rab2-dependent manner via, at least, two independent routes. Acts upstream of Arl8 during presynaptic precursor vesicle biogenesis. Associated with lysosomal marker positive presynaptic cargo vesicles during anterograde and retrograde axonal trafficking, probably while in its GTP-bound active state. Involved in the delivery of presynaptic cargos, but not presynapse assembly or active zone function at synaptic termini. Required for autophagocytosis-dependent remodeling of myofibrils and transverse-tubules (T-tubules) during metamorphosis. The chain is Ras-related protein Rab-2 from Drosophila melanogaster (Fruit fly).